Reading from the N-terminus, the 208-residue chain is MADMKRLKHLMFSPFIDNNPIALQVLGICSALAVTTKLQTAIVMGISVALVTGFSSFFISLVRNYIPNSIRIIVQMAIIASLVTLVDQLLQAFAYELSKQLSVFVGLIITNCIVMGRAEAFAMKEPPLESLIDGIGNGAGYGMMLLVVATVRELIGSGKLLGYTVFQTVQDGGWYQTNGLFLLAPSAFFIIGFLIWGLRTWKPEQAEE.

5 helical membrane passes run 42–62 (IVMG…ISLV), 72–92 (IIVQ…LLQA), 103–123 (VFVG…AFAM), 131–151 (LIDG…VATV), and 178–198 (NGLF…IWGL).

This sequence belongs to the NqrDE/RnfAE family. As to quaternary structure, composed of six subunits; NqrA, NqrB, NqrC, NqrD, NqrE and NqrF.

Its subcellular location is the cell inner membrane. The catalysed reaction is a ubiquinone + n Na(+)(in) + NADH + H(+) = a ubiquinol + n Na(+)(out) + NAD(+). NQR complex catalyzes the reduction of ubiquinone-1 to ubiquinol by two successive reactions, coupled with the transport of Na(+) ions from the cytoplasm to the periplasm. NqrA to NqrE are probably involved in the second step, the conversion of ubisemiquinone to ubiquinol. This is Na(+)-translocating NADH-quinone reductase subunit D from Neisseria gonorrhoeae (strain ATCC 700825 / FA 1090).